Reading from the N-terminus, the 248-residue chain is ATP synthase subunit a, chloroplastic (248 aa).

5 helical membrane-spanning segments follow: residues 38–58 (QVLL…TIAV), 96–116 (VPFI…GALL), 135–155 (INTT…AGLT), 200–220 (LVVA…VMFL), and 221–241 (GLFT…AYIG).

The protein belongs to the ATPase A chain family. In terms of assembly, F-type ATPases have 2 components, CF(1) - the catalytic core - and CF(0) - the membrane proton channel. CF(1) has five subunits: alpha(3), beta(3), gamma(1), delta(1), epsilon(1). CF(0) has four main subunits: a, b, b' and c.

Its subcellular location is the plastid. The protein localises to the chloroplast thylakoid membrane. Key component of the proton channel; it plays a direct role in the translocation of protons across the membrane. This is ATP synthase subunit a, chloroplastic from Pinus thunbergii (Japanese black pine).